We begin with the raw amino-acid sequence, 522 residues long: MTVTEPVLHTTAEKLAELRERLELAKEPGGEKAAAKRDKKGIPSARARIYELVDPGSFMEIGALCRTPGDPNALYGDGVVTGHGLINGRPVGVFSHDQTVFGGTVGEMFGRKVARLMEWCAMVGCPIVGINDSGGARIQDAVTSLAWYAELGRRHELLSGLVPQISIILGKCAGGAVYSPIQTDLVVAVRDQGYMFVTGPDVIKDVTGEDVSLDELGGADHQASYGNIHQVVESEAAAYQYVRDFLSFLPSNCFDKPPVVNPGLEPEITGHDLELDSIVPDSDNMAYDMHEVLLRIFDDGDFLDVAAQAGQAIITGYARVDGRTVGVVANQPMHMSGAIDNEASDKAARFIRFSDAFDIPLVFVVDTPGFLPGVEQEKNGIIKRGGRFLYAVVEADVPKVTITIRKSYGGAYAVMGSKQLTADLNFAWPTARIAVIGADGAAQLLMKRFPDPNAPEAQAIRKSFVENYNLNMAIPWIAAERGFIDAVIDPHETRLLLRKSMHLLRDKQLWWRVGRKHGLIPV.

In terms of domain architecture, CoA carboxyltransferase N-terminal spans 11 to 261; sequence TAEKLAELRE…NCFDKPPVVN (251 aa). The CoA carboxyltransferase C-terminal domain occupies 270 to 503; the sequence is GHDLELDSIV…RLLLRKSMHL (234 aa).

Belongs to the AccD/PCCB family. In terms of assembly, the biotin-dependent long-chain acyl-CoA carboxylase (LCC) complex is composed of AccA3, which contains the biotin carboxylase (BC) and biotin carboxyl carrier protein (BCCP) domains, and AccD4, which contains the carboxyl transferase (CT) domain. The complex also contains the beta5 subunit AccD5 and the epsilon subunit AccE5. The four subunits are essential for activity, but AccD5, together with AccE5, probably plays a structural role rather than a catalytic one.

Component of a biotin-dependent acyl-CoA carboxylase complex. This subunit transfers the CO2 from carboxybiotin to the CoA ester substrate. When associated with the alpha3 subunit AccA3, the beta5 subunit AccD5 and the epsilon subunit AccE5, forms the LCC complex, which is involved in the carboxylation of long chain acyl-CoA. The LCC complex can use C16-C24 substrates, the highest specific activity is obtained with carboxy-C20-CoA. Has low activity with acetyl-CoA and propionyl-CoA. The sequence is that of Biotin-dependent long chain acyl-coenzyme A carboxylase beta4 subunit from Mycobacterium tuberculosis (strain ATCC 25618 / H37Rv).